A 270-amino-acid chain; its full sequence is MPELPEVETTRAGLSPRLQGRVLTRVIVREPRLRWPIPPDLDTQLRGLTLHGLARRGKYLLFDFGAVTQLVHLGMSGSLRLTEPAEPAARHDHVDWRFDDGTILRLRDPRRFGAVLLTENAPGHPLLAGLGPEPLSTAFDAAYLHTQCQRRKTAIKPLIMDAHVVVGVGNIYASESLFHAGIRPGVAAHRLSRAACARLADAIKQVLTAAIAAGGSSLRDYVQSSGELGYFQLQTRVYDREDAPCRRCATPIRRIVQAQRASFYCPTCQR.

P2 acts as the Schiff-base intermediate with DNA in catalysis. E3 (proton donor) is an active-site residue. K58 acts as the Proton donor; for beta-elimination activity in catalysis. DNA-binding residues include H91, R110, and R151. Residues 236–270 (RVYDREDAPCRRCATPIRRIVQAQRASFYCPTCQR) form an FPG-type zinc finger. Residue R260 is the Proton donor; for delta-elimination activity of the active site.

Belongs to the FPG family. As to quaternary structure, monomer. Requires Zn(2+) as cofactor.

It carries out the reaction Hydrolysis of DNA containing ring-opened 7-methylguanine residues, releasing 2,6-diamino-4-hydroxy-5-(N-methyl)formamidopyrimidine.. It catalyses the reaction 2'-deoxyribonucleotide-(2'-deoxyribose 5'-phosphate)-2'-deoxyribonucleotide-DNA = a 3'-end 2'-deoxyribonucleotide-(2,3-dehydro-2,3-deoxyribose 5'-phosphate)-DNA + a 5'-end 5'-phospho-2'-deoxyribonucleoside-DNA + H(+). Involved in base excision repair of DNA damaged by oxidation or by mutagenic agents. Acts as a DNA glycosylase that recognizes and removes damaged bases. Has a preference for oxidized purines, such as 7,8-dihydro-8-oxoguanine (8-oxoG). Has AP (apurinic/apyrimidinic) lyase activity and introduces nicks in the DNA strand. Cleaves the DNA backbone by beta-delta elimination to generate a single-strand break at the site of the removed base with both 3'- and 5'-phosphates. The polypeptide is Formamidopyrimidine-DNA glycosylase (Thiobacillus denitrificans (strain ATCC 25259 / T1)).